The sequence spans 141 residues: Auxin-responsive protein SAUR61 (141 aa).

Belongs to the ARG7 family.

The protein resides in the cell membrane. Its function is as follows. May promote auxin-stimulated organ elongation, such as hypocotyls, stamen filaments and petals. This is Auxin-responsive protein SAUR61 from Arabidopsis thaliana (Mouse-ear cress).